The sequence spans 54 residues: Large ribosomal subunit protein bL33B (54 aa).

Belongs to the bacterial ribosomal protein bL33 family.

The protein is Large ribosomal subunit protein bL33B of Mycobacterium sp. (strain KMS).